The primary structure comprises 102 residues: Small ribosomal subunit protein uS10 (102 aa).

It belongs to the universal ribosomal protein uS10 family. Part of the 30S ribosomal subunit.

Its function is as follows. Involved in the binding of tRNA to the ribosomes. The chain is Small ribosomal subunit protein uS10 from Methanococcus maripaludis (strain C5 / ATCC BAA-1333).